The chain runs to 395 residues: Flap endonuclease 1 (395 aa).

The segment at 1–104 (MGIKHLYQII…GELAKRFMRK (104 aa)) is N-domain. D34 is a Mg(2+) binding site. DNA is bound by residues R47 and R70. Residues D86, E158, E160, D179, and D181 each coordinate Mg(2+). Residues 122–253 (EVEKFSRRTV…NTALKLIRDH (132 aa)) form an I-domain region. E158 is a binding site for DNA. Residues G231 and D233 each coordinate DNA. Position 233 (D233) interacts with Mg(2+). The interval 341–349 (QQSRLEGFF) is interaction with PCNA. Over residues 360–389 (AVLKRKHEEKLELQKKKKKEDSKAKKEAKS) the composition is skewed to basic and acidic residues. A disordered region spans residues 360–395 (AVLKRKHEEKLELQKKKKKEDSKAKKEAKSKPRGTT).

This sequence belongs to the XPG/RAD2 endonuclease family. FEN1 subfamily. As to quaternary structure, interacts with PCNA. Three molecules of FEN1 bind to one PCNA trimer with each molecule binding to one PCNA monomer. PCNA stimulates the nuclease activity without altering cleavage specificity. The cofactor is Mg(2+). Post-translationally, phosphorylated. Phosphorylation upon DNA damage induces relocalization to the nuclear plasma.

It is found in the nucleus. Its subcellular location is the nucleolus. The protein resides in the nucleoplasm. The protein localises to the mitochondrion. Its function is as follows. Structure-specific nuclease with 5'-flap endonuclease and 5'-3' exonuclease activities involved in DNA replication and repair. During DNA replication, cleaves the 5'-overhanging flap structure that is generated by displacement synthesis when DNA polymerase encounters the 5'-end of a downstream Okazaki fragment. It enters the flap from the 5'-end and then tracks to cleave the flap base, leaving a nick for ligation. Also involved in the long patch base excision repair (LP-BER) pathway, by cleaving within the apurinic/apyrimidinic (AP) site-terminated flap. Acts as a genome stabilization factor that prevents flaps from equilibrating into structures that lead to duplications and deletions. Also possesses 5'-3' exonuclease activity on nicked or gapped double-stranded DNA, and exhibits RNase H activity. Also involved in replication and repair of rDNA and in repairing mitochondrial DNA. This chain is Flap endonuclease 1, found in Ajellomyces capsulatus (strain H143) (Darling's disease fungus).